The sequence spans 389 residues: Chalcone synthase 1 (389 aa).

The active site involves Cys164.

It belongs to the thiolase-like superfamily. Chalcone/stilbene synthases family.

It catalyses the reaction (E)-4-coumaroyl-CoA + 3 malonyl-CoA + 3 H(+) = 2',4,4',6'-tetrahydroxychalcone + 3 CO2 + 4 CoA. It functions in the pathway secondary metabolite biosynthesis; flavonoid biosynthesis. The primary product of this enzyme is 4,2',4',6'-tetrahydroxychalcone (also termed naringenin-chalcone or chalcone) which can under specific conditions spontaneously isomerize into naringenin. In Trifolium subterraneum (Subterranean clover), this protein is Chalcone synthase 1 (CHS1).